Here is a 1052-residue protein sequence, read N- to C-terminus: Isoleucine--tRNA ligase (1052 aa).

The 'HIGH' region signature appears at 58–68 (PFANGLPHYGH). The short motif at 627-631 (KMSKS) is the 'KMSKS' region element. Lysine 630 contributes to the ATP binding site.

It belongs to the class-I aminoacyl-tRNA synthetase family. IleS type 2 subfamily. In terms of assembly, monomer. The cofactor is Zn(2+).

It localises to the cytoplasm. The enzyme catalyses tRNA(Ile) + L-isoleucine + ATP = L-isoleucyl-tRNA(Ile) + AMP + diphosphate. Catalyzes the attachment of isoleucine to tRNA(Ile). As IleRS can inadvertently accommodate and process structurally similar amino acids such as valine, to avoid such errors it has two additional distinct tRNA(Ile)-dependent editing activities. One activity is designated as 'pretransfer' editing and involves the hydrolysis of activated Val-AMP. The other activity is designated 'posttransfer' editing and involves deacylation of mischarged Val-tRNA(Ile). The sequence is that of Isoleucine--tRNA ligase from Corynebacterium diphtheriae (strain ATCC 700971 / NCTC 13129 / Biotype gravis).